The primary structure comprises 656 residues: Tetratricopeptide repeat protein 30 homolog (656 aa).

9 TPR repeats span residues 9–42 (EGEFTSTIYTLIHEHKFNDAIRILQYQHERNPKN), 43–76 (LAALSLLAYCYYYTQDFMNAADCYSQLSYNFPQY), 141–174 (AAVIINTACIDYKEGNYEEALKKFNEATEFSGYQ), 176–208 (GLAYSIALCHYRRGDYDSALKLISEIINRGVKD), 238–271 (IEAFNLKFAIYYRTKDFKAAKESLTDMPPRNEHD), 378–412 (RKTAIEIQIKKEQKTTDSDDSLEMRNLIESYDDSL), 416–449 (LPVLMTYAKYYWDKRDYQAVEKLFRNSVDYCKEH), 451–484 (TWKLNVAHTIFMQEKKYKDAAAFYEPIVHKKYDD), and 537–570 (SIISLVIGSLYCSKGNFEFGISRVVKALEPPEKK).

Belongs to the TTC30/dfy-1/fleer family. Component of the IFT complex B composed of at least che-2, che-13, dyf-1, dyf-3, dyf-6, dyf-11, dyf-13, ift-20, ift-74, ift-81, ifta-2, osm-1, osm-5 and osm-6. As to expression, expressed in most amphid, both phasmid and several labial-quadrant neurons.

It localises to the cell projection. The protein resides in the cilium. Plays a role in anterograde intraflagellar transport (IFT), the process by which cilia precursors are transported from the base of the cilium to the site of their incorporation at the tip. Specifically required for the kinesin osm-3 to dock onto and move the IFT particles which contain these precursors. Component of the intraflagellar transport (IFT) complex B required for transport of proteins in the motile cilium. May be required for ciliary entrance and transport of specific ciliary cargo proteins such as che-3 which are related to motility. Required for polyglutamylation of axonemal tubulin in sensory cilia. The polypeptide is Tetratricopeptide repeat protein 30 homolog (Caenorhabditis elegans).